A 308-amino-acid polypeptide reads, in one-letter code: Glutaminase (308 aa).

Positions 66, 117, 161, 168, 192, 244, and 262 each coordinate substrate.

Belongs to the glutaminase family. In terms of assembly, homotetramer.

It catalyses the reaction L-glutamine + H2O = L-glutamate + NH4(+). This Salmonella dublin (strain CT_02021853) protein is Glutaminase.